The sequence spans 165 residues: Ribosome maturation factor RimM (165 aa).

One can recognise a PRC barrel domain in the interval 94–165 (EDEFYIADLN…YVILNYQTKV (72 aa)).

The protein belongs to the RimM family. In terms of assembly, binds ribosomal protein uS19.

Its subcellular location is the cytoplasm. An accessory protein needed during the final step in the assembly of 30S ribosomal subunit, possibly for assembly of the head region. Essential for efficient processing of 16S rRNA. May be needed both before and after RbfA during the maturation of 16S rRNA. It has affinity for free ribosomal 30S subunits but not for 70S ribosomes. This is Ribosome maturation factor RimM from Rickettsia typhi (strain ATCC VR-144 / Wilmington).